The sequence spans 142 residues: MEITSVNHICFSVSDLNTSIQFYKDILHGDLLVSGRTTAYLTIGHTWIALNQEKNIPRNEISHSYTHIAFSIDEEDFQQWIQWLKENQVNILKGRPRDIKDKKSIYFTDPDGHKIELHTGTLKDRMEYYKCENTHMQFYDEF.

Positions 5–120 (SVNHICFSVS…DGHKIELHTG (116 aa)) constitute a VOC domain. Residues His8, His67, and Glu116 each contribute to the Mg(2+) site. Glu116 functions as the Proton donor/acceptor in the catalytic mechanism.

Belongs to the fosfomycin resistance protein family. FosB subfamily. Homodimer. Requires Mg(2+) as cofactor.

The protein resides in the cytoplasm. In terms of biological role, metallothiol transferase which confers resistance to fosfomycin by catalyzing the addition of a thiol cofactor to fosfomycin. L-cysteine is probably the physiological thiol donor. This Staphylococcus epidermidis (strain ATCC 12228 / FDA PCI 1200) protein is Metallothiol transferase FosB.